The sequence spans 329 residues: D-alanine--D-alanine ligase (329 aa).

In terms of domain architecture, ATP-grasp spans 120–326 (KLWLSAIGIP…FADYLEQILR (207 aa)). 150 to 205 (ALAKWGKVFIKAASQGSSVGCYSASNEADLVKGIADAFGYSEQVLIEKAVKPRELE) provides a ligand contact to ATP. Asp-280, Glu-293, and Asn-295 together coordinate Mg(2+).

Belongs to the D-alanine--D-alanine ligase family. Mg(2+) is required as a cofactor. The cofactor is Mn(2+).

Its subcellular location is the cytoplasm. The catalysed reaction is 2 D-alanine + ATP = D-alanyl-D-alanine + ADP + phosphate + H(+). Its pathway is cell wall biogenesis; peptidoglycan biosynthesis. Its function is as follows. Cell wall formation. The protein is D-alanine--D-alanine ligase of Aeromonas hydrophila subsp. hydrophila (strain ATCC 7966 / DSM 30187 / BCRC 13018 / CCUG 14551 / JCM 1027 / KCTC 2358 / NCIMB 9240 / NCTC 8049).